A 336-amino-acid polypeptide reads, in one-letter code: Secreted effector protein SifA (336 aa).

The tract at residues 1–330 (MPITIGNGFL…LHVRSEQQSG (330 aa)) is interaction with host PLEKHM2.

It belongs to the Sif family. Interacts with host PLEKHM2. Interacts with SseJ; the interaction is indirect.

Its subcellular location is the secreted. The protein localises to the host cytoplasm. It is found in the host cell membrane. Its function is as follows. Effector proteins function to alter host cell physiology and promote bacterial survival in host tissues. This protein is required for endosomal tubulation and formation of Salmonella-induced filaments (Sifs), which are filamentous structures containing lysosomal membrane glycoproteins within epithelial cells. Sif formation is concomitant with intracellular bacterial replication. In Salmonella typhimurium (strain LT2 / SGSC1412 / ATCC 700720), this protein is Secreted effector protein SifA (sifA).